The primary structure comprises 710 residues: Polyribonucleotide nucleotidyltransferase (710 aa).

Positions 489 and 495 each coordinate Mg(2+). The KH domain maps to Pro556–Ile615. One can recognise an S1 motif domain in the interval Gly625–Lys693. The interval Ser691–Asp710 is disordered. Basic and acidic residues predominate over residues Pro700–Asp710.

Belongs to the polyribonucleotide nucleotidyltransferase family. Mg(2+) is required as a cofactor.

The protein localises to the cytoplasm. It catalyses the reaction RNA(n+1) + phosphate = RNA(n) + a ribonucleoside 5'-diphosphate. Involved in mRNA degradation. Catalyzes the phosphorolysis of single-stranded polyribonucleotides processively in the 3'- to 5'-direction. The polypeptide is Polyribonucleotide nucleotidyltransferase (Streptococcus pyogenes serotype M4 (strain MGAS10750)).